A 35-amino-acid polypeptide reads, in one-letter code: Sperm protamine alpha isoform 1 (35 aa).

Residues 1 to 35 are disordered; the sequence is MPRRRRRASRPVRRRRRARRSTAVRRRRRVVRRRR. 2 positions are modified to phosphoserine: S9 and S21.

Phosphorylated in immature sperm. Dephosphorylated in mature sperm allowing a stronger interaction with DNA. As to expression, gonads.

It localises to the nucleus. The protein resides in the chromosome. In terms of biological role, protamines substitute for histones in the chromatin of sperm during the haploid phase of spermatogenesis. They compact sperm DNA into a highly condensed, stable and inactive complex. The chain is Sperm protamine alpha isoform 1 from Scomber scombrus (Atlantic mackerel).